The following is a 527-amino-acid chain: ATP synthase subunit alpha (527 aa).

177-184 (GDRQTGKT) contacts ATP.

This sequence belongs to the ATPase alpha/beta chains family. As to quaternary structure, F-type ATPases have 2 components, CF(1) - the catalytic core - and CF(0) - the membrane proton channel. CF(1) has five subunits: alpha(3), beta(3), gamma(1), delta(1), epsilon(1). CF(0) has four main subunits: a(1), b(1), b'(1) and c(9-12).

It is found in the cell membrane. The catalysed reaction is ATP + H2O + 4 H(+)(in) = ADP + phosphate + 5 H(+)(out). Produces ATP from ADP in the presence of a proton gradient across the membrane. The alpha chain is a regulatory subunit. This is ATP synthase subunit alpha from Roseiflexus sp. (strain RS-1).